We begin with the raw amino-acid sequence, 521 residues long: Bifunctional purine biosynthesis protein PurH (521 aa).

The 147-residue stretch at 1–147 folds into the MGS-like domain; sequence MAKITRALIS…KNNADVTVLV (147 aa).

It belongs to the PurH family.

It catalyses the reaction (6R)-10-formyltetrahydrofolate + 5-amino-1-(5-phospho-beta-D-ribosyl)imidazole-4-carboxamide = 5-formamido-1-(5-phospho-D-ribosyl)imidazole-4-carboxamide + (6S)-5,6,7,8-tetrahydrofolate. It carries out the reaction IMP + H2O = 5-formamido-1-(5-phospho-D-ribosyl)imidazole-4-carboxamide. It participates in purine metabolism; IMP biosynthesis via de novo pathway; 5-formamido-1-(5-phospho-D-ribosyl)imidazole-4-carboxamide from 5-amino-1-(5-phospho-D-ribosyl)imidazole-4-carboxamide (10-formyl THF route): step 1/1. The protein operates within purine metabolism; IMP biosynthesis via de novo pathway; IMP from 5-formamido-1-(5-phospho-D-ribosyl)imidazole-4-carboxamide: step 1/1. This chain is Bifunctional purine biosynthesis protein PurH, found in Geobacter sulfurreducens (strain ATCC 51573 / DSM 12127 / PCA).